The primary structure comprises 595 residues: Isoprene synthase, chloroplastic (595 aa).

The N-terminal 37 residues, 1–37 (MATELLCLHRPISLTHKLFRNPLPKVIQATPLTLKLR), are a transit peptide targeting the chloroplast. Asp345 contributes to the dimethylallyl diphosphate binding site. Mg(2+) is bound by residues Asp345 and Asp349. Positions 345–349 (DDIYD) match the DDXXD motif motif. Dimethylallyl diphosphate-binding residues include Glu423, Arg486, and Asn489. Mg(2+) is bound by residues Asn489, Ser493, and Glu497.

It belongs to the terpene synthase family. Tpsb subfamily. It depends on Mg(2+) as a cofactor. Requires Mn(2+) as cofactor.

It localises to the plastid. Its subcellular location is the chloroplast. The enzyme catalyses dimethylallyl diphosphate = isoprene + diphosphate. Lyase that catalyzes the formation of isoprene from dimethylallyl diphosphate. In Populus tremuloides (Quaking aspen), this protein is Isoprene synthase, chloroplastic (ISPS).